The chain runs to 497 residues: Serine/threonine-protein phosphatase 2A 56 kDa regulatory subunit beta isoform (497 aa).

Positions M1–L19 are enriched in low complexity. 2 disordered regions span residues M1–N55 and Q473–S497. S32, S35, S44, S46, S47, and S48 each carry phosphoserine. Basic residues predominate over residues R34–H45.

It belongs to the phosphatase 2A regulatory subunit B56 family. Component of the serine/threonine-protein phosphatase 2A complex (PP2A). This complex consists of a common heterodimeric core enzyme, composed of a 36 kDa catalytic subunit (subunit C) and a 65 kDa constant scaffold subunit (PR65 or subunit A), that associates with a variety of regulatory subunits. Proteins that associate with the core dimer include three families of regulatory subunits B (the R2/B/PR55/B55, R3/B''/PR72/PR130/PR59 and R5/B'/B56 families), the 48 kDa variable regulatory subunit, viral proteins, and cell signaling molecules. Interacts with SGO1. Interacts with AKT1. Ubiquitinated by CUL3-KLHL15 complex; this modification leads to proteasomal degradation.

The protein resides in the cytoplasm. As the regulatory component of the serine/threonine-protein phosphatase 2A (PP2A) holoenzyme, modulates substrate specificity, subcellular localization, and responsiveness to phosphorylation. The phosphorylated form mediates the interaction between PP2A and AKT1, leading to AKT1 dephosphorylation. This is Serine/threonine-protein phosphatase 2A 56 kDa regulatory subunit beta isoform (Ppp2r5b) from Mus musculus (Mouse).